The chain runs to 149 residues: Ribosome-binding factor A (149 aa).

The interval 123-149 is disordered; sequence LAKLREGAAPAGDADPYKTSSKSESEE.

The protein belongs to the RbfA family. Monomer. Binds 30S ribosomal subunits, but not 50S ribosomal subunits or 70S ribosomes.

The protein localises to the cytoplasm. Functionally, one of several proteins that assist in the late maturation steps of the functional core of the 30S ribosomal subunit. Associates with free 30S ribosomal subunits (but not with 30S subunits that are part of 70S ribosomes or polysomes). Required for efficient processing of 16S rRNA. May interact with the 5'-terminal helix region of 16S rRNA. The protein is Ribosome-binding factor A of Corynebacterium glutamicum (strain ATCC 13032 / DSM 20300 / JCM 1318 / BCRC 11384 / CCUG 27702 / LMG 3730 / NBRC 12168 / NCIMB 10025 / NRRL B-2784 / 534).